The sequence spans 607 residues: UvrABC system protein C (607 aa).

The region spanning 19–97 (TLSGVYQMRD…IKQYQPKFNI (79 aa)) is the GIY-YIG domain. A UVR domain is found at 205 to 240 (EHLLQTLTEHMLQASAAQQYERAAIVRDQISELRTI).

Belongs to the UvrC family. As to quaternary structure, interacts with UvrB in an incision complex.

Its subcellular location is the cytoplasm. Functionally, the UvrABC repair system catalyzes the recognition and processing of DNA lesions. UvrC both incises the 5' and 3' sides of the lesion. The N-terminal half is responsible for the 3' incision and the C-terminal half is responsible for the 5' incision. This chain is UvrABC system protein C, found in Dichelobacter nodosus (strain VCS1703A).